Reading from the N-terminus, the 452-residue chain is 51.5 kDa protein (452 aa).

In terms of domain architecture, Helicase ATP-binding spans 1-126; that stretch reads MIQSPPGSGK…KDTYDYMIEG (126 aa). The region spanning 177–333 is the Helicase C-terminal domain; it reads DVVQEYVKHA…NIVQAKQCPD (157 aa). Residues 331–348 fold into a zinc finger; the sequence is CPDCSAMWPLSQKMCNLC.

Its function is as follows. May play a role in either regulating bacteriophages replication or specifying expression of its own genes. This Lactococcus (lactic streptococci) protein is 51.5 kDa protein.